The chain runs to 415 residues: Membrane-bound ghrelin O-acyltransferase mboat4 (415 aa).

Residues 1-6 lie on the Lumenal side of the membrane; that stretch reads MIDLLW. A helical membrane pass occupies residues 7 to 28; that stretch reads ISSDGHPQLFYQFINIPFAFLF. Topologically, residues 29 to 42 are cytoplasmic; it reads HCLSSQGHLSIINR. A helical membrane pass occupies residues 43-58; that stretch reads YVYLAMGGFMLAIATM. Over 59–61 the chain is Lumenal; sequence GPY. Residues 62 to 78 form a helical membrane-spanning segment; the sequence is SSLLFLSAIKLLLLIHY. At 79–84 the chain is on the cytoplasmic side; it reads IHPMHL. A helical membrane pass occupies residues 85–103; sequence HRWILGLQMCWQTCWHLYV. The Lumenal segment spans residues 104 to 122; it reads QYQIYWLQEAPDSRLLLAI. The chain crosses the membrane as a helical span at residues 123–138; sequence SALMLMTQRISSLSLD. Residues 139 to 193 lie on the Cytoplasmic side of the membrane; the sequence is FQEGTISNQSILIPFLTYSLYFPALLGGPLCSFNAFVQSVERQHTSMTSYLGNLT. The helical transmembrane segment at 194 to 214 threads the bilayer; that stretch reads SKISQVIVLVWIKQLFSELLK. The Lumenal segment spans residues 215 to 227; that stretch reads SATFNIDSVCLDV. Residues 228-247 form a helical membrane-spanning segment; that stretch reads LWIWIFSLTLRLNYYAHWKM. The Cytoplasmic portion of the chain corresponds to 248-312; the sequence is SECVNNAAGL…RKIVFNRTSR (65 aa). Active-site residues include asparagine 295 and histidine 326. Residues 313–326 form a helical membrane-spanning segment; the sequence is SPLFMTFGFSALWH. Over 327–328 the chain is Lumenal; sequence GL. Residues 329-345 form a helical membrane-spanning segment; it reads HPGQILGFLIWAVTVQA. Topologically, residues 346 to 364 are cytoplasmic; sequence DYKLHRFSHPKLNSLWRKR. The helical transmembrane segment at 365 to 385 threads the bilayer; sequence LYVCVNWAFTQLTVACVVVCV. The Lumenal portion of the chain corresponds to 386–394; sequence ELQSLASVK. A helical membrane pass occupies residues 395–415; the sequence is LLWSSCIAVFPLLSALILIIL.

This sequence belongs to the membrane-bound acyltransferase family. Monomer. In terms of processing, not glycosylated.

It localises to the endoplasmic reticulum membrane. It catalyses the reaction octanoyl-CoA + L-seryl-[protein] = O-octanoyl-L-seryl-[protein] + CoA. The enzyme catalyses decanoyl-CoA + L-seryl-[protein] = O-decanoyl-L-seryl-[protein] + CoA. It carries out the reaction L-seryl-[protein] + acetyl-CoA = O-acetyl-L-seryl-[protein] + CoA. The catalysed reaction is L-seryl-[protein] + butanoyl-CoA = O-butanoyl-L-seryl-[protein] + CoA. It catalyses the reaction pentanoyl-CoA + L-seryl-[protein] = O-pentanoyl-L-seryl-[protein] + CoA. The enzyme catalyses hexanoyl-CoA + L-seryl-[protein] = O-hexanoyl-L-seryl-[protein] + CoA. It carries out the reaction heptanoyl-CoA + L-seryl-[protein] = O-heptanoyl-L-seryl-[protein] + CoA. The catalysed reaction is nonanoyl-CoA + L-seryl-[protein] = O-nonanoyl-L-seryl-[protein] + CoA. It catalyses the reaction L-seryl-[protein] + dodecanoyl-CoA = O-dodecanoyl-L-seryl-[protein] + CoA. The enzyme catalyses L-seryl-[protein] + tetradecanoyl-CoA = O-tetradecanoyl-L-seryl-[protein] + CoA. It carries out the reaction a fatty acyl-CoA + L-seryl-[protein] = O-fatty acyl-L-seryl-[protein] + CoA. Functionally, catalyzes ghrelin acylation at 'Ser-3' using preferentially octanoyl-CoA, hexanoyl-CoA and decanoyl-CoA as acyl-CoA donors leading to ghrelin activity. In vitro uses also acyl-CoA donors of different lengths from short-chain (C2) to long-chain fatty acids (C16) knowing that acyl-CoA donors from butanoyl-CoA (C4) to dodecanoyl-CoA (C12) are more efficient compared to longer acyl-CoA donors, such as myristoyl-CoA (C14) and palmitoyl-CoA (C16) that are not efficient. The sequence is that of Membrane-bound ghrelin O-acyltransferase mboat4 from Danio rerio (Zebrafish).